The following is a 204-amino-acid chain: N-(5'-phosphoribosyl)anthranilate isomerase (204 aa).

Belongs to the TrpF family.

It carries out the reaction N-(5-phospho-beta-D-ribosyl)anthranilate = 1-(2-carboxyphenylamino)-1-deoxy-D-ribulose 5-phosphate. Its pathway is amino-acid biosynthesis; L-tryptophan biosynthesis; L-tryptophan from chorismate: step 3/5. This chain is N-(5'-phosphoribosyl)anthranilate isomerase, found in Pseudomonas fluorescens (strain Pf0-1).